Consider the following 568-residue polypeptide: Probable asparagine--tRNA ligase, cytoplasmic (568 aa).

The protein belongs to the class-II aminoacyl-tRNA synthetase family.

The protein localises to the cytoplasm. The catalysed reaction is tRNA(Asn) + L-asparagine + ATP = L-asparaginyl-tRNA(Asn) + AMP + diphosphate + H(+). Functionally, cytosolic asparaginyl-tRNA synthetase which catalyzes the specific attachment of asparagine to its cognate tRNA. The polypeptide is Probable asparagine--tRNA ligase, cytoplasmic (nrs1) (Schizosaccharomyces pombe (strain 972 / ATCC 24843) (Fission yeast)).